Reading from the N-terminus, the 591-residue chain is MRLFSHLAVLAILACAVPITAIPSFLSNSYPAHPAEGISLFPQTQPQAPLGLWTRLRNTVIERLWRVPPQLCKNRPGHKGKFPLFSAPASLRARYGDDVVLRFTIRNAEEVKALAEASNILFLDVWASTDEWVDIRLSKDVVPSLLGLLPKSLQTSHIPLIHDLPQTIYESYPSSSQRSSYDVQGFSPSTKHSSDKTNIFFQDYQPFSVIVPWMRLLTSMFSSHVQMINIGSTFEGRDIPALQIGVWPANNPKPRKTVVVSGGSHAREWISVSTVNYVAYSLITNYAKSKHVAELLQQFDFIFIPTLNPDGYIYTWEVDRIWRKNRQDTSLPFCPGVDLDRTWGFKWDGNITADNPCSESYPGEDPFAGIEAKQFSQWAKNQTAQNNTEFVAFIDLHSYSQQIRYPYSYSCQPDPPNLENLEELAIGIAKAIRLTNRETYEVSSACEGLMASQAKVKSDDPFPRIERTGGSALDWFYHDLNVKYSYQIKLRDRGSYGFLLPRENIVPTGQEMFNAVMVLGRFLSGHDGFGPLDWEDESQRPKADEDDIPSENELDENDDSWIPYDYRNHDDQNEGEGYDNDEWGFRRRRKR.

An N-terminal signal peptide occupies residues 1-21 (MRLFSHLAVLAILACAVPITA). Positions 22–175 (IPSFLSNSYP…QTIYESYPSS (154 aa)) are excised as a propeptide. The region spanning 203–523 (DYQPFSVIVP…NAVMVLGRFL (321 aa)) is the Peptidase M14 domain. 2 residues coordinate Zn(2+): His-265 and Glu-268. Substrate contacts are provided by residues 265–268 (HARE), Arg-323, and 340–341 (DR). A disulfide bond links Cys-334 and Cys-357. Asn-350, Asn-381, and Asn-386 each carry an N-linked (GlcNAc...) asparagine glycan. Residue His-397 coordinates Zn(2+). 398–399 (SY) is a substrate binding site. The segment at 533–591 (DWEDESQRPKADEDDIPSENELDENDDSWIPYDYRNHDDQNEGEGYDNDEWGFRRRRKR) is disordered. 2 stretches are compositionally biased toward acidic residues: residues 544-559 (DEDDIPSENELDENDD) and 573-582 (NEGEGYDNDE).

The protein belongs to the peptidase M14 family. Zn(2+) is required as a cofactor.

Its subcellular location is the vacuole. The protein localises to the secreted. Inactive carboxypeptidase that may play a role in cell wall organization and biogenesis. The chain is Inactive metallocarboxypeptidase ECM14 (ECM14) from Paracoccidioides brasiliensis (strain Pb18).